A 427-amino-acid chain; its full sequence is MTAIVDIVGREILDSRGNPTVEVDVLLEDGALGRAAVPSGASTGAHEAVELRDGDTGRYLGKGVEKAVEAVNGEIFDAIGGLDAEEQAQIDAVMIELDGTPNKARLGANAILGVSLAVAKAAAISNNLPLYRYVGGVNARTLPVPMMNIINGGAHADNPIDFQEFMILPAGAPTFAEGLRWGAEIFHTLKKGLKDAGHNTNVGDEGGFAPNLASAEAALDFVLKAIEKAGFKPGEDVFLGLDCAATEFFKDGAYHYEGEGKVRDIDAQVKYLAQLVGNYPIVTIEDGMSEDDWAGWKQLTDAIGAKCQLVGDDLFVTNVERLGRGIKEATGNAILVKVNQIGSLTETLETVELAHKSGYRAVMSHRSGETEDSTIADLAVATNCGQIKTGSLARSDRTAKYNQLLRIEQELGAQAKYAGKAALKAFA.

Glutamine 163 provides a ligand contact to (2R)-2-phosphoglycerate. Residue glutamate 205 is the Proton donor of the active site. Positions 242, 285, and 312 each coordinate Mg(2+). (2R)-2-phosphoglycerate contacts are provided by lysine 337, arginine 366, serine 367, and lysine 388. The Proton acceptor role is filled by lysine 337.

The protein belongs to the enolase family. The cofactor is Mg(2+).

The protein resides in the cytoplasm. It is found in the secreted. It localises to the cell surface. The enzyme catalyses (2R)-2-phosphoglycerate = phosphoenolpyruvate + H2O. The protein operates within carbohydrate degradation; glycolysis; pyruvate from D-glyceraldehyde 3-phosphate: step 4/5. Catalyzes the reversible conversion of 2-phosphoglycerate (2-PG) into phosphoenolpyruvate (PEP). It is essential for the degradation of carbohydrates via glycolysis. The protein is Enolase of Azorhizobium caulinodans (strain ATCC 43989 / DSM 5975 / JCM 20966 / LMG 6465 / NBRC 14845 / NCIMB 13405 / ORS 571).